The chain runs to 417 residues: Imidazolonepropionase (417 aa).

The Fe(3+) site is built by H80 and H82. Zn(2+) is bound by residues H80 and H82. 4-imidazolone-5-propanoate-binding residues include R89, Y152, and H187. Y152 contacts N-formimidoyl-L-glutamate. H252 contacts Fe(3+). H252 lines the Zn(2+) pocket. Residue E255 participates in 4-imidazolone-5-propanoate binding. D326 serves as a coordination point for Fe(3+). Residue D326 coordinates Zn(2+). N-formimidoyl-L-glutamate-binding residues include N328 and G330. 4-imidazolone-5-propanoate is bound at residue S331.

Belongs to the metallo-dependent hydrolases superfamily. HutI family. Zn(2+) is required as a cofactor. It depends on Fe(3+) as a cofactor.

It localises to the cytoplasm. The enzyme catalyses 4-imidazolone-5-propanoate + H2O = N-formimidoyl-L-glutamate. It participates in amino-acid degradation; L-histidine degradation into L-glutamate; N-formimidoyl-L-glutamate from L-histidine: step 3/3. Its function is as follows. Catalyzes the hydrolytic cleavage of the carbon-nitrogen bond in imidazolone-5-propanoate to yield N-formimidoyl-L-glutamate. It is the third step in the universal histidine degradation pathway. This is Imidazolonepropionase from Bacteroides thetaiotaomicron (strain ATCC 29148 / DSM 2079 / JCM 5827 / CCUG 10774 / NCTC 10582 / VPI-5482 / E50).